The chain runs to 473 residues: uncharacterized protein (473 aa).

One can recognise an SET domain in the interval 26-254 (PKLYIASSGV…KMSEIFNSFG (229 aa)).

This is an uncharacterized protein from Schizosaccharomyces pombe (strain 972 / ATCC 24843) (Fission yeast).